The chain runs to 397 residues: Elongation factor Tu (397 aa).

The tr-type G domain maps to 10 to 206 (KPHVNIGTIG…AVDEYIPTPE (197 aa)). The tract at residues 19–26 (GHVDHGKT) is G1. A GTP-binding site is contributed by 19-26 (GHVDHGKT). Thr26 is a binding site for Mg(2+). The interval 60–64 (GITIS) is G2. A G3 region spans residues 81 to 84 (DCPG). GTP is bound by residues 81-85 (DCPGH) and 136-139 (NKAD). The interval 136–139 (NKAD) is G4. Residues 174-176 (SAL) form a G5 region.

This sequence belongs to the TRAFAC class translation factor GTPase superfamily. Classic translation factor GTPase family. EF-Tu/EF-1A subfamily. Monomer.

The protein localises to the cytoplasm. The catalysed reaction is GTP + H2O = GDP + phosphate + H(+). In terms of biological role, GTP hydrolase that promotes the GTP-dependent binding of aminoacyl-tRNA to the A-site of ribosomes during protein biosynthesis. The chain is Elongation factor Tu from Clostridium tetani (strain Massachusetts / E88).